A 299-amino-acid chain; its full sequence is Transcription elongation factor A protein 2 (299 aa).

The TFIIS N-terminal domain occupies 5 to 82 (EEIARIARRL…KSWKKLLDVS (78 aa)). K57 participates in a covalent cross-link: Glycyl lysine isopeptide (Lys-Gly) (interchain with G-Cter in ubiquitin). 2 positions are modified to phosphoserine: S59 and S100. Positions 83 to 126 (DGKSRDQGRGTPLPTSSSKDASGTTDLSCKKPDPPRTSSTPRIT) are disordered. A compositionally biased stretch (polar residues) spans 95–109 (LPTSSSKDASGTTDL). In terms of domain architecture, TFIIS central spans 138–254 (VRNKCREMLT…EHQMARTGGT (117 aa)). The TFIIS-type zinc-finger motif lies at 257–297 (DLFTCNKCRKKNCTYTQVQTRSSDEPMTTYVVCNECGNRWK). Positions 261, 264, 289, and 292 each coordinate Zn(2+).

This sequence belongs to the TFS-II family. As to quaternary structure, interacts with the basal transcription factor GTF2B. Interacts with REXO1. In terms of tissue distribution, testis specific.

Its subcellular location is the nucleus. Its function is as follows. Necessary for efficient RNA polymerase II transcription elongation past template-encoded arresting sites. The arresting sites in DNA have the property of trapping a certain fraction of elongating RNA polymerases that pass through, resulting in locked ternary complexes. Cleavage of the nascent transcript by S-II allows the resumption of elongation from the new 3'-terminus. The protein is Transcription elongation factor A protein 2 (Tcea2) of Rattus norvegicus (Rat).